An 863-amino-acid polypeptide reads, in one-letter code: Potassium/sodium hyperpolarization-activated cyclic nucleotide-gated channel 2 (863 aa).

Residues 1–10 (MDARGGGGRP) show a composition bias toward gly residues. The disordered stretch occupies residues 1-131 (MDARGGGGRP…AGPAGEPRGS (131 aa)). The Cytoplasmic portion of the chain corresponds to 1 to 188 (MDARGGGGRP…PYSDFRFYWD (188 aa)). Residues 17–47 (TPAPGPPPPPPPPAPPQPQPPPAPPPNPTTP) show a composition bias toward pro residues. Residues 106 to 128 (GAASGPAAAEEAGSEEAGPAGEP) are compositionally biased toward low complexity. A phosphoserine mark is found at serine 119 and serine 134. The interval 131–182 (SQASFLQRQFGALLQPGVNKFSLRMFGSQKAVEREQERVKSAGAWIIHPYSD) is involved in subunit assembly. Residues 189 to 209 (FTMLLFMVGNLIIIPVGITFF) traverse the membrane as a helical segment. Residues 210–213 (KDET) are Extracellular-facing. A helical membrane pass occupies residues 214–234 (TAPWIVFNVVSDTFFLMDLVL). At 235 to 261 (NFRTGIVIEDNTEIILDPEKIKKKYLR) the chain is on the cytoplasmic side. Residues 262–282 (TWFVVDFVSSIPVDYIFLIVE) form a helical membrane-spanning segment. The Extracellular segment spans residues 283-290 (KGIDSEVY). Residues 291 to 311 (KTARALRIVRFTKILSLLRLL) traverse the membrane as a helical; Voltage-sensor segment. The Cytoplasmic segment spans residues 312–342 (RLSRLIRYIHQWEEIFHMTYDLASAVMRICN). A helical transmembrane segment spans residues 343–363 (LISMMLLLCHWDGCLQFLVPM). The Extracellular portion of the chain corresponds to 364 to 386 (LQDFPSDCWVSINNMVNHSWSEL). Residue asparagine 380 is glycosylated (N-linked (GlcNAc...) asparagine). Positions 387–408 (YSFALFKAMSHMLCIGYGRQAP) form an intramembrane region, pore-forming. Residues 409-413 (ESMTD) lie on the Extracellular side of the membrane. A helical membrane pass occupies residues 414-434 (IWLTMLSMIVGATCYAMFIGH). The Cytoplasmic segment spans residues 435 to 863 (ATALIQSLDS…SARSRLSSNL (429 aa)). 3',5'-cyclic AMP contacts are provided by glycine 581, glutamate 582, cysteine 584, arginine 591, threonine 592, and arginine 632. A Phosphoserine; by PKG/PRKG2 modification is found at serine 641. Serine 726 is modified (phosphoserine). Arginine 728 carries the post-translational modification Omega-N-methylarginine. Residues 730 to 863 (VRRAPPGPLP…SARSRLSSNL (134 aa)) are disordered. The span at 734–755 (PPGPLPPAASPGPPAASPPAAP) shows a compositional bias: pro residues. Serine 743, serine 750, and serine 757 each carry phosphoserine. Low complexity-rich tracts occupy residues 756–765 (SSPRAPRTSP) and 778–834 (PALP…AAPS). 3 positions are modified to phosphoserine: serine 840, serine 842, and serine 847.

This sequence belongs to the potassium channel HCN family. In terms of assembly, homotetramer. The channel is composed of a homo- or heterotetrameric complex of pore-forming subunits. Heterotetramer with HCN1. Forms an obligate 4:4 complex with accessory subunit PEX5L. Interacts with KCNE2. Phosphorylation at Ser-641 by PRKG2 shifts the voltage-dependence to more negative voltages, hence counteracting the stimulatory effect of cGMP on gating. In terms of processing, N-glycosylated; required for cell surface trafficking of HCN2. Post-translationally, S-palmitoylated. As to expression, highly expressed in neonatal and adult ventricle and in brain. Highly expressed in the pyramidal layer in hippocampus, in anterior dorsal nucleus in thalamus, in the mammillary nucleus in hypothalamus, in red nucleus, in trigeminal mesencephalic, spinal and principal nuclei, in cochlear and trapezoid nuclei and in the dorsal tegemental nucleus.

The protein resides in the cell membrane. The catalysed reaction is Na(+)(in) = Na(+)(out). The enzyme catalyses K(+)(in) = K(+)(out). It catalyses the reaction NH4(+)(in) = NH4(+)(out). Activated by cAMP, and at 10-100 times higher concentrations, also by cGMP. cAMP binding causes a conformation change that leads to the assembly of an active tetramer and channel opening. In the absence of cAMP, the C-terminal region is thought to exert a tonic inhibition on the pore when HCN2 is in a non-tetrameric form. Channel activity is modulated by intracellular chloride ions and pH; acidic pH shifts the activation to more negative voltages. Phosphatidylinositol-4,5- bisphosphate (PIP(2)) acts as a ligand that allosterically opens HCN2 by shifting voltage-dependent channel activation toward depolarized potentials. Inhibited by extracellular cesium ions. Functionally, hyperpolarization-activated ion channel exhibiting weak selectivity for potassium over sodium ions. Contributes to the native pacemaker currents in heart (If) and in neurons (Ih). Can also transport ammonium in the distal nephron. Involved in the initiation of neuropathic pain in sensory neurons. Produces a large instantaneous current. The protein is Potassium/sodium hyperpolarization-activated cyclic nucleotide-gated channel 2 (Hcn2) of Rattus norvegicus (Rat).